The sequence spans 288 residues: Pyridoxal kinase PdxY (288 aa).

Residues serine 12 and threonine 47 to glutamine 48 contribute to the substrate site. Residues aspartate 114, glutamate 151, lysine 184, and arginine 211 to leucine 214 each bind ATP. Aspartate 225 provides a ligand contact to substrate.

It belongs to the pyridoxine kinase family. PdxY subfamily. In terms of assembly, homodimer. Mg(2+) serves as cofactor.

It carries out the reaction pyridoxal + ATP = pyridoxal 5'-phosphate + ADP + H(+). The protein operates within cofactor metabolism; pyridoxal 5'-phosphate salvage; pyridoxal 5'-phosphate from pyridoxal: step 1/1. Functionally, pyridoxal kinase involved in the salvage pathway of pyridoxal 5'-phosphate (PLP). Catalyzes the phosphorylation of pyridoxal to PLP. The polypeptide is Pyridoxal kinase PdxY (Pseudomonas syringae pv. syringae (strain B728a)).